The chain runs to 330 residues: RNA polymerase sigma factor RpoS (330 aa).

Positions 56–89 (DATQLYLGEIGYSPLLTAEEEVYFARRALRGDVA) are sigma-70 factor domain-1. Residues 94 to 164 (MIESNLRLVV…ERAIMNQTRT (71 aa)) form a sigma-70 factor domain-2 region. Positions 118–121 (DLIE) match the Interaction with polymerase core subunit RpoC motif. Residues 174–249 (ELNVYLRTAR…DEKENGPEDT (76 aa)) form a sigma-70 factor domain-3 region. Residues 262–315 (WLFELNAKQREVLARRFGLLGYEAATLEDVGREIGLTRERVRQIQVEGLRRLRE) are sigma-70 factor domain-4. A DNA-binding region (H-T-H motif) is located at residues 288 to 307 (LEDVGREIGLTRERVRQIQV).

The protein belongs to the sigma-70 factor family. RpoS subfamily. As to quaternary structure, interacts with the RNA polymerase core enzyme and RssB.

The protein localises to the cytoplasm. Its function is as follows. Sigma factors are initiation factors that promote the attachment of RNA polymerase to specific initiation sites and are then released. This sigma factor is the master transcriptional regulator of the stationary phase and the general stress response. Controls, positively or negatively, the expression of several hundred genes, which are mainly involved in metabolism, transport, regulation and stress management. Protects stationary phase cells from killing induced by endoribonuclease MazF. The chain is RNA polymerase sigma factor RpoS from Escherichia coli (strain K12).